Consider the following 359-residue polypeptide: MMKRETLIEAGIIGGLAGAQVIYAGNSELLSQLLSLGIDPLLIVILCTFASVLLITPLAFLLERKLWPRSLSFKLKIKLVLVALAGVTLFQGLFLEGMKHTSASMATAMPNLCPAFIFVIAWAAGMEKVKLSCMYSRVKMGGTVLCVMGALIMSLMHSTTATLSSVKTIPIVPDEVVVDKDKILGCLYLLLAICGLSSSIVLQASILAEFPAPISMFSMVSLMGGITTVALQYALKGSMEMGSASVIGLGHLVGYAILGGLVSGGGLSFNAWVIKRKGPVIVSLFSPIATVVCVVVSAFTMEESFNLGSFAGMALMFGGLYFVLWAKGKEDCEEIDEMKQDDEESLLRTEFDLQKPLLL.

10 helical membrane-spanning segments follow: residues 5–25 (ETLI…IYAG), 41–61 (LLIV…LAFL), 77–97 (IKLV…FLEG), 105–125 (MATA…WAAG), 143–163 (TVLC…TATL), 183–203 (ILGC…IVLQ), 206–226 (ILAE…MGGI), 246–266 (VIGL…SGGG), 279–299 (PVIV…VSAF), and 305–325 (FNLG…FVLW). Residues 30-154 (LSQLLSLGID…LCVMGALIMS (125 aa)) form the EamA 1 domain. Positions 206 to 324 (ILAEFPAPIS…LMFGGLYFVL (119 aa)) constitute an EamA 2 domain.

It belongs to the drug/metabolite transporter (DMT) superfamily. Plant drug/metabolite exporter (P-DME) (TC 2.A.7.4) family.

It is found in the membrane. The chain is WAT1-related protein At4g16620 from Arabidopsis thaliana (Mouse-ear cress).